Reading from the N-terminus, the 250-residue chain is tRNA pseudouridine synthase A (250 aa).

The active-site Nucleophile is the Asp-52. Tyr-111 is a binding site for substrate.

Belongs to the tRNA pseudouridine synthase TruA family. As to quaternary structure, homodimer.

The catalysed reaction is uridine(38/39/40) in tRNA = pseudouridine(38/39/40) in tRNA. In terms of biological role, formation of pseudouridine at positions 38, 39 and 40 in the anticodon stem and loop of transfer RNAs. The sequence is that of tRNA pseudouridine synthase A from Methylorubrum extorquens (strain CM4 / NCIMB 13688) (Methylobacterium extorquens).